We begin with the raw amino-acid sequence, 308 residues long: MTTSMPDIANHTTAQTEGTLDWVGMSNIEMPIMVASKGESERMVSAHIDAFVNLKDAQAKGIHMSRLYLLIDELSTSNILNYQSLVSLLDGFISSHQELSDQAKVQFCFDYHLRRKSLISGKEGWKAYPVTLTGNLNQGKLTIELTIDVPYSSTCPCSAALARQLIQKAFQDKFAQQSELALTDVHDWLGTTEGIVATPHSQRSVAEVKVKLNSSINDFPITEIVDLVENSLKTPVQAAVKREDEQEFARLNGQNLMFCEDAARRLQHSLNQTDQFDDFWLRINHLESLHAHDAVSVTTKGIKDGYQP.

It belongs to the GTP cyclohydrolase IV family.

The enzyme catalyses GTP + H2O = 7,8-dihydroneopterin 3'-triphosphate + formate + H(+). Its pathway is cofactor biosynthesis; 7,8-dihydroneopterin triphosphate biosynthesis; 7,8-dihydroneopterin triphosphate from GTP: step 1/1. Functionally, converts GTP to 7,8-dihydroneopterin triphosphate. The sequence is that of GTP cyclohydrolase FolE2 from Colwellia psychrerythraea (strain 34H / ATCC BAA-681) (Vibrio psychroerythus).